A 131-amino-acid chain; its full sequence is Small ribosomal subunit protein uS11 (131 aa).

It belongs to the universal ribosomal protein uS11 family. As to quaternary structure, part of the 30S ribosomal subunit. Interacts with proteins S7 and S18. Binds to IF-3.

Functionally, located on the platform of the 30S subunit, it bridges several disparate RNA helices of the 16S rRNA. Forms part of the Shine-Dalgarno cleft in the 70S ribosome. In Chromobacterium violaceum (strain ATCC 12472 / DSM 30191 / JCM 1249 / CCUG 213 / NBRC 12614 / NCIMB 9131 / NCTC 9757 / MK), this protein is Small ribosomal subunit protein uS11.